Here is a 202-residue protein sequence, read N- to C-terminus: Recombination protein RecR (202 aa).

The C4-type zinc-finger motif lies at 58–73 (CANCGNLTDKKLCDIC). A Toprim domain is found at 81-178 (SVITVVEDSM…KVSRIAMGVP (98 aa)).

The protein belongs to the RecR family.

Its function is as follows. May play a role in DNA repair. It seems to be involved in an RecBC-independent recombinational process of DNA repair. It may act with RecF and RecO. The sequence is that of Recombination protein RecR from Finegoldia magna (strain ATCC 29328 / DSM 20472 / WAL 2508) (Peptostreptococcus magnus).